The sequence spans 353 residues: uncharacterized protein (353 aa).

An HTH luxR-type domain is found at 18-83 (NIEFPCLLSE…TLWRDVFLRF (66 aa)). The H-T-H motif DNA-binding region spans 42–61 (VNEISKRRNRSIKTVSCQKM). Residues 98 to 350 (NSSVLPVVSS…AFVRKLLASL (253 aa)) form the EAL domain.

This is an uncharacterized protein from Escherichia coli (strain K12).